Consider the following 159-residue polypeptide: Olfactory receptor-like protein COR8 (159 aa).

The Cytoplasmic segment spans residues 1–16 (VAICNPLLYTISMPKS). Residues 17 to 41 (LCMKLVAGSYLGGVLNSLTQTCCLL) form a helical membrane-spanning segment. Topologically, residues 42-82 (PLPFCGPNVINHYFCDTNPLLKLTCSDGRLNELLLVTFNGT) are extracellular. An N-linked (GlcNAc...) asparagine glycan is attached at N80. A helical transmembrane segment spans residues 83–103 (ISMTVLLIIVISYVYILVSIL). The Cytoplasmic portion of the chain corresponds to 104–116 (SIRSARGRHKAFS). A helical membrane pass occupies residues 117 to 137 (TCASHLLTVTLFYVPAGLSHM). Over 138-148 (QPGSKYSLDME) the chain is Extracellular. The helical transmembrane segment at 149 to 159 (KVTAVFYTLLV) threads the bilayer.

The protein belongs to the G-protein coupled receptor 1 family.

Its subcellular location is the cell membrane. Functionally, odorant receptor. The sequence is that of Olfactory receptor-like protein COR8 (COR8) from Gallus gallus (Chicken).